The following is a 226-amino-acid chain: Protein-L-isoaspartate O-methyltransferase (226 aa).

Serine 66 is an active-site residue.

Belongs to the methyltransferase superfamily. L-isoaspartyl/D-aspartyl protein methyltransferase family.

Its subcellular location is the cytoplasm. The enzyme catalyses [protein]-L-isoaspartate + S-adenosyl-L-methionine = [protein]-L-isoaspartate alpha-methyl ester + S-adenosyl-L-homocysteine. Functionally, catalyzes the methyl esterification of L-isoaspartyl residues in peptides and proteins that result from spontaneous decomposition of normal L-aspartyl and L-asparaginyl residues. It plays a role in the repair and/or degradation of damaged proteins. The polypeptide is Protein-L-isoaspartate O-methyltransferase (Methanopyrus kandleri (strain AV19 / DSM 6324 / JCM 9639 / NBRC 100938)).